Here is a 442-residue protein sequence, read N- to C-terminus: NAD kinase 2, mitochondrial (442 aa).

The transit peptide at 1–62 directs the protein to the mitochondrion; sequence MTCYRGFLLG…RELAGCGSRA (62 aa). Positions 24–36 are enriched in low complexity; that stretch reads RGPGAGGPAARPR. Residues 24–60 are disordered; that stretch reads RGPGAGGPAARPRLGGDGGGRRHLGQGQPRELAGCGS. Lys76 carries the N6-acetyllysine; alternate modification. Position 76 is an N6-succinyllysine; alternate (Lys76). The residue at position 188 (Ser188) is a Phosphoserine. Lys302 carries the post-translational modification N6-succinyllysine. An N6-acetyllysine; alternate modification is found at Lys317. N6-succinyllysine; alternate is present on Lys317. Residue Ser367 is modified to Phosphoserine. Lys397 is subject to N6-acetyllysine.

The protein belongs to the NAD kinase family. In terms of assembly, homodimer. As to expression, widely expressed.

The protein resides in the mitochondrion. The enzyme catalyses NAD(+) + ATP = ADP + NADP(+) + H(+). With respect to regulation, inhibited by NADH, NADPH and NADP(+). In terms of biological role, mitochondrial NAD(+) kinase that phosphorylates NAD(+) to yield NADP(+). Can use both ATP or inorganic polyphosphate as the phosphoryl donor. Also has weak NADH kinase activity in vitro; however NADH kinase activity is much weaker than the NAD(+) kinase activity and may not be relevant in vivo. The chain is NAD kinase 2, mitochondrial (NADK2) from Homo sapiens (Human).